Reading from the N-terminus, the 277-residue chain is Undecaprenyl-diphosphatase (277 aa).

A run of 6 helical transmembrane segments spans residues 44–64, 86–106, 110–130, 184–204, 215–235, and 250–270; these read RAMAFNIIIQLAAILAVVWEF, GNLLLAFMPAVVLGVLFADLI, LFNPVTVAAALVVGGVIMLWA, AATEFSFFLAMPTMVGAAVYS, GDLPVFALGFVTSFIFAMIAV, and FAWYRIVFGLFILATWQFGWV.

Belongs to the UppP family.

It localises to the cell inner membrane. It catalyses the reaction di-trans,octa-cis-undecaprenyl diphosphate + H2O = di-trans,octa-cis-undecaprenyl phosphate + phosphate + H(+). Catalyzes the dephosphorylation of undecaprenyl diphosphate (UPP). Confers resistance to bacitracin. The sequence is that of Undecaprenyl-diphosphatase from Pseudomonas putida (strain ATCC 47054 / DSM 6125 / CFBP 8728 / NCIMB 11950 / KT2440).